Reading from the N-terminus, the 338-residue chain is Transcription factor GRA2 (338 aa).

2 disordered regions span residues 171-230 (CQDS…PHYA) and 256-277 (TQHE…DGGS). Residues 174-203 (SGVSQPSNLADDTLGQGQPVSTVVQPQHPG) show a composition bias toward polar residues. The segment at 223-236 (KRQRPHYAIEKRYR) is basic motif. The region spanning 223–303 (KRQRPHYAIE…NQATLCIRQL (81 aa)) is the bHLH domain. Positions 237–303 (AGLQERFEAL…NQATLCIRQL (67 aa)) are helix-loop-helix motif.

It is found in the nucleus. Functionally, transcription factor that specifically regulates the expression of the gene cluster that mediates the biosynthesis of gramillins A and B, bicyclic lipopeptides that induce cell death in maize leaves but not in wheat leaves. This chain is Transcription factor GRA2 (GRA2), found in Gibberella zeae (strain ATCC MYA-4620 / CBS 123657 / FGSC 9075 / NRRL 31084 / PH-1) (Wheat head blight fungus).